A 203-amino-acid polypeptide reads, in one-letter code: MKILVTAFDPFGGESVNPSYEVLKNLKDNIEGAEIIKLQVPTAFYVSVEKAIEKIKEVNPDAVLSIGQAGGRYDISVERVAINIDDARIPDNMGQQPIDIPIDPEGPPAYFATIPIKEIVEAIKKENLPASVSNSAGTYVCNHLMYGILNYIHKNKLNIKAGFIHIPYLPEQVLEKPNTPYMSLSDMVKAIETAIKVIVKAMA.

Catalysis depends on residues Glu-78, Cys-141, and His-165.

The protein belongs to the peptidase C15 family. As to quaternary structure, homotetramer.

The protein resides in the cytoplasm. It carries out the reaction Release of an N-terminal pyroglutamyl group from a polypeptide, the second amino acid generally not being Pro.. Removes 5-oxoproline from various penultimate amino acid residues except L-proline. The polypeptide is Pyrrolidone-carboxylate peptidase 1 (Caldanaerobacter subterraneus subsp. tengcongensis (strain DSM 15242 / JCM 11007 / NBRC 100824 / MB4) (Thermoanaerobacter tengcongensis)).